Reading from the N-terminus, the 141-residue chain is Putative pre-16S rRNA nuclease (141 aa).

The protein belongs to the YqgF nuclease family.

It localises to the cytoplasm. Could be a nuclease involved in processing of the 5'-end of pre-16S rRNA. The chain is Putative pre-16S rRNA nuclease from Vibrio parahaemolyticus serotype O3:K6 (strain RIMD 2210633).